A 1383-amino-acid polypeptide reads, in one-letter code: Palladin (1383 aa).

Disordered stretches follow at residues 1-22 (MSGTSSHESFYDSLSDMQEESK), 52-169 (DSET…SQLC), and 183-238 (FKAA…KSPG). A compositionally biased stretch (basic and acidic residues) spans 78-96 (HPSHKETKLGEHASRRPQD). The segment covering 191 to 201 (RSPNGESSSPD) has biased composition (polar residues). S192 is modified (phosphoserine). Positions 210-223 (QPSALLSASASQSP) are enriched in low complexity. The 90-residue stretch at 271-360 (PRFIQKLRSQ…GSDTTSAEVF (90 aa)) folds into the Ig-like C2-type 1 domain. An intrachain disulfide couples C292 to C344. S401 bears the Phosphoserine mark. The region spanning 440–539 (PPVFTKELQN…ATSTAQLVVT (100 aa)) is the Ig-like C2-type 2 domain. C462 and C521 are joined by a disulfide. Positions 562–566 (FPPPP) are interaction with VASP. Disordered regions lie at residues 609–653 (ETNG…LAKP), 673–728 (AGAR…SSGS), and 740–846 (AQNL…RFGH). A Phosphoserine modification is found at S632. The residue at position 635 (T635) is a Phosphothreonine. Position 641 is a phosphoserine (S641). The segment at 646–676 (PPPLLAKPKLDPLKLQQLQNQIRLEQEAGAR) is interaction with LASP1. The interval 676–696 (RQPPPAPRSAPPSPPFPPPPA) is interaction with SORBS2, SPIN90 and SRC. Pro residues predominate over residues 677 to 697 (QPPPAPRSAPPSPPFPPPPAF). Residues S684, S688, and S728 each carry the phosphoserine modification. Residues 745-763 (PASGHGTPASSPSSSSLPS) are compositionally biased toward low complexity. The interaction with EPS8 stretch occupies residues 766–831 (SPTPRQFGRA…PPPPPPLPSP (66 aa)). Residues 796 to 831 (SPSPPPPPPPVFSPTAAFPVPDVFPLPPPPPPLPSP) form an interaction with SORBS2, SPIN90, SRC and PFN1 region. Pro residues-rich tracts occupy residues 797-807 (PSPPPPPPPVF) and 817-830 (DVFPLPPPPPPLPS). The tract at residues 819-823 (FPLPP) is interaction with VASP. Polar residues predominate over residues 832-846 (GQASHCSSPATRFGH). Residues 833–890 (QASHCSSPATRFGHSQTPAAFLSALLPSQPPPAAVNALGLPKGVTPAGFPKKASRTAR) form an interaction with ACTN region. Phosphoserine occurs at positions 893, 979, and 984. The Ig-like C2-type 3 domain occupies 1001 to 1085 (PFFEMKLKHY…MAANPQGRIS (85 aa)). Residues 1096–1125 (NQRGRSPRSPSGHPHVRRPRSRSRDSGDEN) form a disordered region. Residues 1098–1108 (RGRSPRSPSGH) are compositionally biased toward low complexity. Phosphoserine occurs at positions 1101, 1104, 1106, and 1116. A Phosphoserine; by PKB/AKT1 modification is found at S1118. S1121 carries the post-translational modification Phosphoserine. Ig-like C2-type domains follow at residues 1135-1226 (PHFL…LVVA) and 1233-1324 (PPVF…ARLD). 2 interaction with EZR regions span residues 1137–1226 (FLQA…LVVA) and 1236–1326 (FIEK…LDVY). A disulfide bond links C1156 and C1208. Phosphoserine is present on S1352.

It belongs to the myotilin/palladin family. In terms of assembly, interacts with EPS8. Interacts with LASP1. Interacts with VASP. Interacts with ACTN. Interacts with SORBS2. Interacts with PFN1. Interacts with LPP. Interacts with SPIN90. Interacts with SRC. Interacts with EZR. Interacts with RAI14. Phosphorylated predominantly on serines and, to a lesser extent, on tyrosines. Phosphorylation at Ser-1118 by PKB/AKT1 modulates cytoskeletal organization and cell motility. Detected in both muscle and non-muscle tissues. High expression in prostate, ovary, colon, and kidney. Not detected in spleen, skeletal muscle, lung and peripheral blood lymphocytes (at protein level). Protein is overexpressed in FA6, HPAF, IMIM-PC2, SUIT-2 and PancTu-II sporadic pancreatic cancer cell lines.

Its subcellular location is the cytoplasm. It is found in the cytoskeleton. It localises to the cell junction. The protein localises to the focal adhesion. The protein resides in the myofibril. Its subcellular location is the sarcomere. It is found in the z line. It localises to the cell projection. The protein localises to the ruffle. The protein resides in the podosome. Its subcellular location is the lamellipodium. It is found in the axon. It localises to the growth cone. Functionally, cytoskeletal protein required for organization of normal actin cytoskeleton. Roles in establishing cell morphology, motility, cell adhesion and cell-extracellular matrix interactions in a variety of cell types. May function as a scaffolding molecule with the potential to influence both actin polymerization and the assembly of existing actin filaments into higher-order arrays. Binds to proteins that bind to either monomeric or filamentous actin. Localizes at sites where active actin remodeling takes place, such as lamellipodia and membrane ruffles. Different isoforms may have functional differences. Involved in the control of morphological and cytoskeletal changes associated with dendritic cell maturation. Involved in targeting ACTN to specific subcellular foci. This chain is Palladin (PALLD), found in Homo sapiens (Human).